A 212-amino-acid polypeptide reads, in one-letter code: Protein Nef (212 aa).

A lipid anchor (N-myristoyl glycine; by host) is attached at G2. S6 carries the post-translational modification Phosphoserine; by host. Residues 67–71 form an acidic; interacts with host PACS1 and PACS2; stabilizes the interaction of NEF/MHC-I with host AP1M1; necessary for MHC-I internalization region; it reads EEEEE. Positions 75–84 are SH3-binding; interaction with Src family tyrosine kinases; it reads PVRPQVPLRP. Residues 78–81 carry the PxxP; stabilizes the interaction of NEF/MHC-I with host AP1M1; necessary for MHC-I internalization motif; that stretch reads PQVP. The mediates dimerization, Nef-PTE1 interaction stretch occupies residues 114–130; sequence DILDLWMYHTQGILPDW. The tract at residues 154-186 is binding to ATP6V1H; that stretch reads LSAEEVEEANEGDNNALLHPICQHGADDDHKEV. The Dileucine internalization motif; necessary for CD4 internalization signature appears at 170 to 171; the sequence is LL. The short motif at 180–181 is the Diacidic; necessary for CD4 internalization element; that stretch reads DD.

This sequence belongs to the lentivirus primate group Nef protein family. Monomer; cytosolic form. Homodimer; membrane bound form. Interacts with Nef associated p21-activated kinase (PAK2); this interaction activates PAK2. Associates with the Nef-MHC-I-AP1 complex; this complex is required for MHC-I internalization. Interacts (via C-terminus) with host PI3-kinase. Interacts with host PACS1; this interaction seems to be weak. Interacts with host PACS2. Interacts with host LCK and MAPK3; these interactions inhibit the kinase activity of the latter. Interacts with host ATP6V1H; this interaction may play a role in CD4 endocytosis. Associates with the CD4-Nef-AP2 complex; this complex is required for CD4 internalization. Interacts with host AP2 subunit alpha and AP2 subunit sigma2. Interacts with TCR-zeta chain; this interaction up-regulates the Fas ligand (FasL) surface expression. Interacts with host HCK, LYN, and SRC; these interactions activate the Src family kinases. Interacts with MAP3K5; this interaction inhibits the Fas and TNFR-mediated death signals. Interacts with beta-COP and PTE1. Interacts with human RACK1; this increases Nef phosphorylation by PKC. Interacts with TP53; this interaction decreases the half-life of TP53, protecting the infected cell against p53-mediated apoptosis. The virion-associated Nef proteins are cleaved by the viral protease to release the soluble C-terminal core protein. Nef is probably cleaved concomitantly with viral structural proteins on maturation of virus particles. In terms of processing, myristoylated. Post-translationally, phosphorylated on serine residues, probably by host PKCdelta and theta.

Its subcellular location is the host cell membrane. It is found in the virion. The protein localises to the secreted. The protein resides in the host Golgi apparatus membrane. In terms of biological role, factor of infectivity and pathogenicity, required for optimal virus replication. Alters numerous pathways of T-lymphocyte function and down-regulates immunity surface molecules in order to evade host defense and increase viral infectivity. Alters the functionality of other immunity cells, like dendritic cells, monocytes/macrophages and NK cells. In infected CD4(+) T-lymphocytes, down-regulates the surface MHC-I, mature MHC-II, CD4, CD28, CCR5 and CXCR4 molecules. Mediates internalization and degradation of host CD4 through the interaction of with the cytoplasmic tail of CD4, the recruitment of AP-2 (clathrin adapter protein complex 2), internalization through clathrin coated pits, and subsequent transport to endosomes and lysosomes for degradation. Diverts host MHC-I molecules to the trans-Golgi network-associated endosomal compartments by an endocytic pathway to finally target them for degradation. MHC-I down-regulation may involve AP-1 (clathrin adapter protein complex 1) or possibly Src family kinase-ZAP70/Syk-PI3K cascade recruited by PACS2. In consequence infected cells are masked for immune recognition by cytotoxic T-lymphocytes. Decreasing the number of immune receptors also prevents reinfection by more HIV particles (superinfection). Down-regulates host SERINC3 and SERINC5 thereby excluding these proteins from the viral particles. Virion infectivity is drastically higher when SERINC3 or SERINC5 are excluded from the viral envelope, because these host antiviral proteins impair the membrane fusion event necessary for subsequent virion penetration. Its function is as follows. Bypasses host T-cell signaling by inducing a transcriptional program nearly identical to that of anti-CD3 cell activation. Interaction with TCR-zeta chain up-regulates the Fas ligand (FasL). Increasing surface FasL molecules and decreasing surface MHC-I molecules on infected CD4(+) cells send attacking cytotoxic CD8+ T-lymphocytes into apoptosis. Functionally, plays a role in optimizing the host cell environment for viral replication without causing cell death by apoptosis. Protects the infected cells from apoptosis in order to keep them alive until the next virus generation is ready to strike. Inhibits the Fas and TNFR-mediated death signals by blocking MAP3K5/ASK1. Decreases the half-life of TP53, protecting the infected cell against p53-mediated apoptosis. Inhibits the apoptotic signals regulated by the Bcl-2 family proteins through the formation of a Nef/PI3-kinase/PAK2 complex that leads to activation of PAK2 and induces phosphorylation of host BAD. In terms of biological role, extracellular Nef protein targets CD4(+) T-lymphocytes for apoptosis by interacting with CXCR4 surface receptors. The chain is Protein Nef from Human immunodeficiency virus type 1 group N (isolate YBF30) (HIV-1).